We begin with the raw amino-acid sequence, 175 residues long: Large ribosomal subunit protein bL17 (175 aa).

A disordered region spans residues 124–175 (VKKSKPTAPAQAVATKPAVEETREAAAAQPQEPEVEISEVKDPAEECEAKAD). A compositionally biased stretch (basic and acidic residues) spans 161–175 (SEVKDPAEECEAKAD).

It belongs to the bacterial ribosomal protein bL17 family. Part of the 50S ribosomal subunit. Contacts protein L32.

The protein is Large ribosomal subunit protein bL17 of Geobacter sulfurreducens (strain ATCC 51573 / DSM 12127 / PCA).